A 174-amino-acid chain; its full sequence is uncharacterized protein (174 aa).

It belongs to the IIV-6 196R family.

This is an uncharacterized protein from Acheta domesticus (House cricket).